The chain runs to 281 residues: 2,3,4,5-tetrahydropyridine-2,6-dicarboxylate N-succinyltransferase (281 aa).

Positions 108 and 145 each coordinate substrate.

Belongs to the transferase hexapeptide repeat family. As to quaternary structure, homotrimer.

The protein resides in the cytoplasm. The catalysed reaction is (S)-2,3,4,5-tetrahydrodipicolinate + succinyl-CoA + H2O = (S)-2-succinylamino-6-oxoheptanedioate + CoA. It functions in the pathway amino-acid biosynthesis; L-lysine biosynthesis via DAP pathway; LL-2,6-diaminopimelate from (S)-tetrahydrodipicolinate (succinylase route): step 1/3. This chain is 2,3,4,5-tetrahydropyridine-2,6-dicarboxylate N-succinyltransferase, found in Bradyrhizobium diazoefficiens (strain JCM 10833 / BCRC 13528 / IAM 13628 / NBRC 14792 / USDA 110).